A 210-amino-acid chain; its full sequence is Small ribosomal subunit protein bS6 (210 aa).

The tract at residues 99–210 is disordered; sequence PLPTKRNTKS…KDTKEVKEEG (112 aa). Residues 120 to 210 show a composition bias toward basic and acidic residues; sequence NDTKEVKEAK…KDTKEVKEEG (91 aa).

This sequence belongs to the bacterial ribosomal protein bS6 family.

Functionally, binds together with bS18 to 16S ribosomal RNA. The sequence is that of Small ribosomal subunit protein bS6 from Prochlorococcus marinus (strain SARG / CCMP1375 / SS120).